A 338-amino-acid polypeptide reads, in one-letter code: Phenylalanine--tRNA ligase alpha subunit (338 aa).

Glutamate 252 is a binding site for Mg(2+).

The protein belongs to the class-II aminoacyl-tRNA synthetase family. Phe-tRNA synthetase alpha subunit type 1 subfamily. As to quaternary structure, tetramer of two alpha and two beta subunits. Mg(2+) serves as cofactor.

The protein resides in the cytoplasm. The enzyme catalyses tRNA(Phe) + L-phenylalanine + ATP = L-phenylalanyl-tRNA(Phe) + AMP + diphosphate + H(+). This chain is Phenylalanine--tRNA ligase alpha subunit, found in Ectopseudomonas mendocina (strain ymp) (Pseudomonas mendocina).